Consider the following 383-residue polypeptide: Acetylornithine deacetylase (383 aa).

His80 is a binding site for Zn(2+). Asp82 is a catalytic residue. Asp112 serves as a coordination point for Zn(2+). Glu144 is a catalytic residue. 3 residues coordinate Zn(2+): Glu145, Glu169, and His355.

This sequence belongs to the peptidase M20A family. ArgE subfamily. Homodimer. The cofactor is Zn(2+). Co(2+) is required as a cofactor. Glutathione serves as cofactor.

The protein localises to the cytoplasm. The enzyme catalyses N(2)-acetyl-L-ornithine + H2O = L-ornithine + acetate. It functions in the pathway amino-acid biosynthesis; L-arginine biosynthesis; L-ornithine from N(2)-acetyl-L-ornithine (linear): step 1/1. In terms of biological role, catalyzes the hydrolysis of the amide bond of N(2)-acetylated L-amino acids. Cleaves the acetyl group from N-acetyl-L-ornithine to form L-ornithine, an intermediate in L-arginine biosynthesis pathway, and a branchpoint in the synthesis of polyamines. This chain is Acetylornithine deacetylase, found in Salmonella typhi.